Reading from the N-terminus, the 127-residue chain is Peroxiredoxin-2 (127 aa).

The 125-residue stretch at 1 to 125 (LFFYPLDFTF…ALRLVQGXQY (125 aa)) folds into the Thioredoxin domain. Cys-12 (cysteine sulfenic acid (-SOH) intermediate) is an active-site residue. Ser-73 carries the phosphoserine modification.

This sequence belongs to the peroxiredoxin family. AhpC/Prx1 subfamily. As to quaternary structure, homodimer; disulfide-linked, upon oxidation. 5 homodimers assemble to form a ring-like decamer. Interacts with TIPIN. In terms of processing, the enzyme can be inactivated by further oxidation of the cysteine sulfenic acid (C(P)-SOH) to sulphinic acid (C(P)-SO2H) instead of its condensation to a disulfide bond. It can be reactivated by forming a transient disulfide bond with sulfiredoxin SRXN1, which reduces the cysteine sulfinic acid in an ATP- and Mg-dependent manner. Post-translationally, acetylation increases resistance to transition to high molecular-mass complexes. Deacetylated by HDAC6 which decreases reducing activity.

Its subcellular location is the cytoplasm. It carries out the reaction a hydroperoxide + [thioredoxin]-dithiol = an alcohol + [thioredoxin]-disulfide + H2O. Thiol-specific peroxidase that catalyzes the reduction of hydrogen peroxide and organic hydroperoxides to water and alcohols, respectively. Plays a role in cell protection against oxidative stress by detoxifying peroxides and as sensor of hydrogen peroxide-mediated signaling events. Might participate in the signaling cascades of growth factors and tumor necrosis factor-alpha by regulating the intracellular concentrations of H(2)O(2). The chain is Peroxiredoxin-2 (PRDX2) from Sus scrofa (Pig).